Here is a 156-residue protein sequence, read N- to C-terminus: MSRRHAAEKREITPDAKFHDYVVAKFMNCLMLDGKKSAAEAIVYGALDKIQAKTGQDPLKVFHEALDNVKPALEVRSRRVGGATYQVPVEVRSDRRQALAIRWLIDYSRKRSETTMIDRLSGELLDAANNRGAAVKKREDTHRMAEANKAFSHYRW.

This sequence belongs to the universal ribosomal protein uS7 family. Part of the 30S ribosomal subunit. Contacts proteins S9 and S11.

One of the primary rRNA binding proteins, it binds directly to 16S rRNA where it nucleates assembly of the head domain of the 30S subunit. Is located at the subunit interface close to the decoding center, probably blocks exit of the E-site tRNA. This is Small ribosomal subunit protein uS7 from Paramagnetospirillum magneticum (strain ATCC 700264 / AMB-1) (Magnetospirillum magneticum).